We begin with the raw amino-acid sequence, 218 residues long: Probable transaldolase (218 aa).

Lysine 87 (schiff-base intermediate with substrate) is an active-site residue.

It belongs to the transaldolase family. Type 3B subfamily.

It localises to the cytoplasm. It carries out the reaction D-sedoheptulose 7-phosphate + D-glyceraldehyde 3-phosphate = D-erythrose 4-phosphate + beta-D-fructose 6-phosphate. Its pathway is carbohydrate degradation; pentose phosphate pathway; D-glyceraldehyde 3-phosphate and beta-D-fructose 6-phosphate from D-ribose 5-phosphate and D-xylulose 5-phosphate (non-oxidative stage): step 2/3. In terms of biological role, transaldolase is important for the balance of metabolites in the pentose-phosphate pathway. The protein is Probable transaldolase of Bacteroides fragilis (strain ATCC 25285 / DSM 2151 / CCUG 4856 / JCM 11019 / LMG 10263 / NCTC 9343 / Onslow / VPI 2553 / EN-2).